We begin with the raw amino-acid sequence, 957 residues long: Outer kinetochore KNL1 complex subunit knl-1 (957 aa).

The stretch at 87 to 90 (MDIT) is repeat 1. Residues 87-393 (MDITGLNSTP…NFDDVAMDIT (307 aa)) form an 8 X 4 AA repeats of M-[D/E]-[I/L/M]-[S/T] region. The interval 89–111 (ITGLNSTPVTPKTQTPFNGSMDM) is disordered. The span at 91-106 (GLNSTPVTPKTQTPFN) shows a compositional bias: polar residues. A run of 7 repeats spans residues 109–112 (MDMS), 206–209 (MDIT), 251–254 (MDIT), 282–285 (MDLT), 326–329 (MEMT), 367–370 (MEMT), and 390–393 (MDIT). Residues 476–504 (SLQQSSMRMSTTITEDVTASKNPESSTIS) are disordered. The stretch at 830 to 950 (KFAKESNVEI…RKKKEEMVER (121 aa)) forms a coiled coil.

As to quaternary structure, component of the KNL1 complex composed of knl-1 and kbp-5. Part of the ten-subunit outer kinetochore KMN network that includes the KNL1, MIS12 and NDC80 complexes. Interacts with the protein phosphatase 1 (PP1) catalytic subunit gsp-1; the interaction is direct. Interacts with the protein phosphatase 1 (PP1) catalytic subunit gsp-2; the interaction is direct. Interacts with the MIS12 complex subunits kbp-1, kbp-2 and mis-12. Interacts with the NDC80 complex components ndc-80 and him-10. Interacts with knl-3. Interacts with kbp-3. Interacts with kbp-4. Interacts with kbp-5.

It is found in the cytoplasm. Its subcellular location is the cell cortex. The protein resides in the chromosome. It localises to the centromere. The protein localises to the kinetochore. Functionally, acts as a component of the outer kinetochore KNL1 complex that serves as a docking point for spindle assembly checkpoint components and mediates microtubule-kinetochore interactions. Kinetochores, consisting of a centromere-associated inner segment and a microtubule-contacting outer segment, play a crucial role in chromosome segregation by mediating the physical connection between centromeric DNA and spindle microtubules. The outer kinetochore is made up of the ten-subunit KMN network, comprising the MIS12, NDC80 and KNL1 complexes, and auxiliary microtubule-associated components; together they connect the outer kinetochore with the inner kinetochore, bind microtubules, and mediate interactions with mitotic checkpoint proteins that delay anaphase until chromosomes are bioriented on the spindle. Binds the protein phosphatase 1 catalytic subunits gsp-1 and gsp-2, which has a role in delaying formation of load-bearing kinetochore-microtubule attachments. Required for the recruitment of spindle-assembly checkpoint components bub-1 and mdf-1/2 to unattached kinetochores. Binds microtubules which plays a role in silencing of the spindle assembly checkpoint, but not the formation of load-bearing microtubule-kinetochore attachments. Has a role in the correct localization of the spindly-like protein spdl-1 and the RZZ complex that is composed of rod-1, czw-1 and zwl-1 to kinetochores. The chain is Outer kinetochore KNL1 complex subunit knl-1 from Caenorhabditis briggsae.